A 778-amino-acid polypeptide reads, in one-letter code: Arf-GAP with coiled-coil, ANK repeat and PH domain-containing protein 2 (778 aa).

One can recognise a BAR domain in the interval 1 to 226 (MKMTVDFEEC…MKDLGAQLDR (226 aa)). One can recognise a PH domain in the interval 266–361 (GIVMEGYLFK…WIKAVQTSIA (96 aa)). The disordered stretch occupies residues 371–391 (SEKLDKKSSPSTGSLDSGNES). Positions 379–388 (SPSTGSLDSG) are enriched in polar residues. Residues S384 and S387 each carry the phosphoserine modification. The Arf-GAP domain maps to 399-520 (ESALQRVQCI…KFVDKYSISL (122 aa)). The C4-type zinc finger occupies 414-437 (CCDCGLADPRWASINLGITLCIEC). At S521 the chain carries Phosphoserine. Residues 540 to 599 (SISKFGPGDQVRASAQSSVRSNDSGIQQSSDDGRESLPSTVSANSLYEPEGERQDSSMFL) are disordered. Residues 552–569 (ASAQSSVRSNDSGIQQSS) are compositionally biased toward polar residues. Residues S581 and S584 each carry the phosphoserine modification. ANK repeat units follow at residues 640-669 (NKAT…NVNQ), 673-702 (QGRG…NQHA), and 706-735 (EGKD…NEEM). Phosphotyrosine is present on Y742. S775 carries the post-translational modification Phosphoserine.

Interacts (via KANK domains) with RAB35 (GTP-bound form); the interaction is direct and probably recruits ACAP2 to membranes including plasma membrane. Interacts with MICALL1; the interaction is indirect through RAB35. Widely expressed. Highest level in lung.

It localises to the cell membrane. Its subcellular location is the endosome membrane. Its activity is regulated as follows. GAP activity stimulated by phosphatidylinositol 4,5-bisphosphate (PIP2) and phosphatidic acid. In terms of biological role, GTPase-activating protein (GAP) for ADP ribosylation factor 6 (ARF6). Doesn't show GAP activity for RAB35. The protein is Arf-GAP with coiled-coil, ANK repeat and PH domain-containing protein 2 (ACAP2) of Homo sapiens (Human).